Reading from the N-terminus, the 463-residue chain is Probable glycosyltransferase 3 (463 aa).

Positions Met1–Gln20 are disordered. The Cytoplasmic portion of the chain corresponds to Met1–Thr24. Residues Pro9–Gln20 show a composition bias toward low complexity. The chain crosses the membrane as a helical; Signal-anchor for type II membrane protein span at residues Phe25–Gly47. Over Ile48–Ser463 the chain is Lumenal. The segment at Glu82–Asn125 is disordered. Positions Thr87–Leu99 are enriched in acidic residues. The span at Ala103–Ala118 shows a compositional bias: low complexity. Asn110, Asn125, and Asn442 each carry an N-linked (GlcNAc...) asparagine glycan.

This sequence belongs to the glycosyltransferase 34 family.

The protein resides in the golgi apparatus membrane. Its function is as follows. Probable glycosyltransferase that may be involved in the biosynthesis of xyloglucan. The chain is Probable glycosyltransferase 3 from Oryza sativa subsp. indica (Rice).